The following is a 461-amino-acid chain: Coagulation factor IX (461 aa).

The N-terminal stretch at M1–C28 is a signal peptide. Positions T29–R46 are excised as a propeptide. Ca(2+) contacts are provided by Y47, N48, E53, E54, E61, E63, E66, E67, E72, E73, and E76. The region spanning Y47 to V92 is the Gla domain. 11 positions are modified to 4-carboxyglutamate: E53, E54, E61, E63, E66, E67, E72, E73, E76, E79, and E82. Mg(2+) is bound at residue E61. C64 and C69 form a disulfide bridge. E66 lines the Mg(2+) pocket. Residue E72 participates in Mg(2+) binding. E76 provides a ligand contact to Mg(2+). E82 is a binding site for Ca(2+). E82 serves as a coordination point for Mg(2+). Residue T85 is glycosylated (O-linked (GalNAc...) threonine). E86, D93, G94, and Q96 together coordinate Ca(2+). The residue at position 86 (E86) is a 4-carboxyglutamate. E86 contacts Mg(2+). Positions D93–E129 constitute an EGF-like 1; calcium-binding domain. 10 disulfide bridges follow: C97-C108, C102-C117, C119-C128, C134-C145, C141-C155, C157-C170, C178-C335, C252-C268, C382-C396, and C407-C435. O-linked (Glc...) serine glycosylation is present at S99. O-linked (Fuc...) serine glycosylation is present at S107. The Ca(2+) site is built by D110 and D111. D110 is subject to (3R)-3-hydroxyaspartate. S114 is modified (phosphoserine). The EGF-like 2 domain maps to L130–E171. Residues A192–R226 constitute a propeptide, activation peptide. At Y201 the chain carries Sulfotyrosine. The residue at position 204 (S204) is a Phosphoserine. A Phosphothreonine; alternate modification is found at T205. A glycan (O-linked (GalNAc...) threonine; alternate) is linked at T205. Residue N213 is glycosylated (N-linked (GlcNAc...) asparagine). Residues T215 and T225 are each glycosylated (O-linked (GalNAc...) threonine). In terms of domain architecture, Peptidase S1 spans V227 to K459. Catalysis depends on H267, which acts as the Charge relay system. Residues E281, N283, E286, E288, and E291 each contribute to the Ca(2+) site. Residue D315 is the Charge relay system of the active site. Catalysis depends on S411, which acts as the Charge relay system.

Belongs to the peptidase S1 family. As to quaternary structure, heterodimer of a light chain and a heavy chain; disulfide-linked. Interacts (inactive and activated) with F11 (activated) in calcium-dependent manner. Interacts with SERPINC1. Post-translationally, activated by factor XIa, which excises the activation peptide. The propeptide can also be removed by snake venom protease. The iron and 2-oxoglutarate dependent 3-hydroxylation of aspartate and asparagine is (R) stereospecific within EGF domains. Activated by coagulation factor VIIa-tissue factor (F7-F3) complex in calcium-dependent manner. In terms of processing, predominantly O-glucosylated at Ser-99 by POGLUT1 in vitro.

It is found in the secreted. It catalyses the reaction Selective cleavage of Arg-|-Ile bond in factor X to form factor Xa.. In terms of biological role, factor IX is a vitamin K-dependent plasma protein that participates in the intrinsic pathway of blood coagulation by converting factor X to its active form in the presence of Ca(2+) ions, phospholipids, and factor VIIIa. The sequence is that of Coagulation factor IX (F9) from Pan troglodytes (Chimpanzee).